We begin with the raw amino-acid sequence, 1382 residues long: DNA-directed RNA polymerase subunit beta (1382 aa).

The protein belongs to the RNA polymerase beta chain family. The RNAP catalytic core consists of 2 alpha, 1 beta, 1 beta' and 1 omega subunit. When a sigma factor is associated with the core the holoenzyme is formed, which can initiate transcription.

It carries out the reaction RNA(n) + a ribonucleoside 5'-triphosphate = RNA(n+1) + diphosphate. In terms of biological role, DNA-dependent RNA polymerase catalyzes the transcription of DNA into RNA using the four ribonucleoside triphosphates as substrates. This chain is DNA-directed RNA polymerase subunit beta, found in Aliarcobacter butzleri (strain RM4018) (Arcobacter butzleri).